A 574-amino-acid polypeptide reads, in one-letter code: Dihydroxy-acid dehydratase 2 (574 aa).

The interval M1–P20 is disordered. C56 provides a ligand contact to [2Fe-2S] cluster. Residue D88 coordinates Mg(2+). C129 provides a ligand contact to [2Fe-2S] cluster. The Mg(2+) site is built by D130 and K131. N6-carboxylysine is present on K131. [2Fe-2S] cluster is bound at residue C201. E451 serves as a coordination point for Mg(2+). The active-site Proton acceptor is the S477.

This sequence belongs to the IlvD/Edd family. In terms of assembly, homodimer. It depends on [2Fe-2S] cluster as a cofactor. Requires Mg(2+) as cofactor.

The catalysed reaction is (2R)-2,3-dihydroxy-3-methylbutanoate = 3-methyl-2-oxobutanoate + H2O. It carries out the reaction (2R,3R)-2,3-dihydroxy-3-methylpentanoate = (S)-3-methyl-2-oxopentanoate + H2O. It participates in amino-acid biosynthesis; L-isoleucine biosynthesis; L-isoleucine from 2-oxobutanoate: step 3/4. The protein operates within amino-acid biosynthesis; L-valine biosynthesis; L-valine from pyruvate: step 3/4. Its function is as follows. Functions in the biosynthesis of branched-chain amino acids. Catalyzes the dehydration of (2R,3R)-2,3-dihydroxy-3-methylpentanoate (2,3-dihydroxy-3-methylvalerate) into 2-oxo-3-methylpentanoate (2-oxo-3-methylvalerate) and of (2R)-2,3-dihydroxy-3-methylbutanoate (2,3-dihydroxyisovalerate) into 2-oxo-3-methylbutanoate (2-oxoisovalerate), the penultimate precursor to L-isoleucine and L-valine, respectively. The polypeptide is Dihydroxy-acid dehydratase 2 (Bradyrhizobium diazoefficiens (strain JCM 10833 / BCRC 13528 / IAM 13628 / NBRC 14792 / USDA 110)).